A 198-amino-acid polypeptide reads, in one-letter code: Carnitine operon protein CaiE (198 aa).

The disordered stretch occupies residues 179–198; it reads VEENRPRLKGTTDVKPKSAQ. Residues 180-198 show a composition bias toward basic and acidic residues; the sequence is EENRPRLKGTTDVKPKSAQ.

This sequence belongs to the transferase hexapeptide repeat family.

It functions in the pathway amine and polyamine metabolism; carnitine metabolism. Overproduction of CaiE stimulates the activity of CaiB and CaiD. The sequence is that of Carnitine operon protein CaiE from Salmonella typhi.